A 195-amino-acid chain; its full sequence is Peptidyl-tRNA hydrolase (195 aa).

Position 17 (Y17) interacts with tRNA. H22 acts as the Proton acceptor in catalysis. The tRNA site is built by F68, N70, and N116.

The protein belongs to the PTH family. As to quaternary structure, monomer.

Its subcellular location is the cytoplasm. The enzyme catalyses an N-acyl-L-alpha-aminoacyl-tRNA + H2O = an N-acyl-L-amino acid + a tRNA + H(+). Functionally, hydrolyzes ribosome-free peptidyl-tRNAs (with 1 or more amino acids incorporated), which drop off the ribosome during protein synthesis, or as a result of ribosome stalling. In terms of biological role, catalyzes the release of premature peptidyl moieties from peptidyl-tRNA molecules trapped in stalled 50S ribosomal subunits, and thus maintains levels of free tRNAs and 50S ribosomes. The protein is Peptidyl-tRNA hydrolase of Shewanella amazonensis (strain ATCC BAA-1098 / SB2B).